Consider the following 272-residue polypeptide: HMP-PP phosphatase (272 aa).

Catalysis depends on aspartate 8, which acts as the Nucleophile. Mg(2+) is bound by residues aspartate 8, aspartate 10, and aspartate 212.

It belongs to the HAD-like hydrolase superfamily. Cof family. The cofactor is Mg(2+).

It carries out the reaction 4-amino-2-methyl-5-(diphosphooxymethyl)pyrimidine + H2O = 4-amino-2-methyl-5-(phosphooxymethyl)pyrimidine + phosphate + H(+). Functionally, catalyzes the hydrolysis of 4-amino-2-methyl-5-hydroxymethylpyrimidine pyrophosphate (HMP-PP) to 4-amino-2-methyl-5-hydroxymethylpyrimidine phosphate (HMP-P). This Escherichia coli O8 (strain IAI1) protein is HMP-PP phosphatase.